The chain runs to 549 residues: Glucose-6-phosphate isomerase (549 aa).

The Proton donor role is filled by glutamate 355. Catalysis depends on residues histidine 387 and lysine 515.

This sequence belongs to the GPI family.

The protein resides in the cytoplasm. The catalysed reaction is alpha-D-glucose 6-phosphate = beta-D-fructose 6-phosphate. It participates in carbohydrate biosynthesis; gluconeogenesis. The protein operates within carbohydrate degradation; glycolysis; D-glyceraldehyde 3-phosphate and glycerone phosphate from D-glucose: step 2/4. Catalyzes the reversible isomerization of glucose-6-phosphate to fructose-6-phosphate. This chain is Glucose-6-phosphate isomerase, found in Pasteurella multocida (strain Pm70).